Reading from the N-terminus, the 74-residue chain is uncharacterized protein (74 aa).

The chain crosses the membrane as a helical span at residues 15–32 (FLHALTVTFLSDIFVWLV).

It localises to the membrane. This is an uncharacterized protein from Saccharomyces cerevisiae (strain ATCC 204508 / S288c) (Baker's yeast).